The primary structure comprises 791 residues: Protein CLASP-2 (791 aa).

Composition is skewed to low complexity over residues 259–271 (ASDAASSSTSVNS), 323–334 (RTPNTRPMTTRT), and 372–381 (SQPGSRNGSP). Disordered regions lie at residues 259 to 283 (ASDAASSSTSVNSERGSAPFRSKLS), 315 to 391 (TRMT…TGTL), and 422 to 454 (AMNTAKESLGQPSRTEDDEFLLPKRKPKTPQKS). Residues 422 to 434 (AMNTAKESLGQPS) show a composition bias toward polar residues.

Belongs to the CLASP family. Interacts with hcp-1 and hcp-2.

It localises to the cytoplasm. The protein resides in the cytoskeleton. The protein localises to the microtubule organizing center. Its subcellular location is the centrosome. It is found in the chromosome. It localises to the centromere. The protein resides in the kinetochore. The protein localises to the spindle. Its function is as follows. Probable microtubule plus-end tracking protein that promotes the stabilization of dynamic microtubules. Required for the formation of mitotic and meiotic spindles. Specifically promotes the polymerization of kinetochore-bound microtubules. Also required for cytoplasmic streaming. The protein is Protein CLASP-2 (cls-2) of Caenorhabditis briggsae.